Reading from the N-terminus, the 78-residue chain is DNA-directed RNA polymerase subunit omega (78 aa).

It belongs to the RNA polymerase subunit omega family. As to quaternary structure, in cyanobacteria the RNAP catalytic core is composed of 2 alpha, 1 beta, 1 beta', 1 gamma and 1 omega subunit. When a sigma factor is associated with the core the holoenzyme is formed, which can initiate transcription.

It catalyses the reaction RNA(n) + a ribonucleoside 5'-triphosphate = RNA(n+1) + diphosphate. Functionally, promotes RNA polymerase assembly. Latches the N- and C-terminal regions of the beta' subunit thereby facilitating its interaction with the beta and alpha subunits. In Nostoc punctiforme (strain ATCC 29133 / PCC 73102), this protein is DNA-directed RNA polymerase subunit omega.